The following is a 166-amino-acid chain: Cytochrome c-type biogenesis protein CcmE (166 aa).

The Cytoplasmic portion of the chain corresponds to 1–8; sequence MNAVRRKK. The helical; Signal-anchor for type II membrane protein transmembrane segment at 9 to 29 threads the bilayer; that stretch reads LMWVMFTLAGAVIAVALVIYA. Over 30-166 the chain is Periplasmic; sequence IGKQTDYYFD…KLHETKTLQQ (137 aa). Positions 124 and 128 each coordinate heme. Residues 133–166 are disordered; sequence VAKSMKENNRSGAVPSSEQYNPAEKLHETKTLQQ. The segment covering 142 to 152 has biased composition (polar residues); that stretch reads RSGAVPSSEQY. Basic and acidic residues predominate over residues 156-166; sequence EKLHETKTLQQ.

Belongs to the CcmE/CycJ family.

Its subcellular location is the cell inner membrane. Heme chaperone required for the biogenesis of c-type cytochromes. Transiently binds heme delivered by CcmC and transfers the heme to apo-cytochromes in a process facilitated by CcmF and CcmH. This is Cytochrome c-type biogenesis protein CcmE from Psychrobacter arcticus (strain DSM 17307 / VKM B-2377 / 273-4).